The following is a 1214-amino-acid chain: Transient receptor potential cation channel subfamily M member 4 (1214 aa).

Residues 1 to 782 are Cytoplasmic-facing; it reads MVVPEKEQSW…FHFWGAPVTI (782 aa). Residues arginine 171, arginine 214, and leucine 225 each contribute to the ATP site. Positions 270, 392, 395, and 396 each coordinate Ca(2+). ATP is bound by residues arginine 421 and glycine 448. The helical transmembrane segment at 783 to 803 threads the bilayer; the sequence is FMGNVVSYLLFLLLFSRVLLV. Topologically, residues 804-814 are extracellular; that stretch reads DFQPAPPGSLE. A helical membrane pass occupies residues 815–835; it reads LLLYFWAFTLLCEELRQGLSG. Ca(2+)-binding residues include glutamate 828 and glutamine 831. Topologically, residues 836-863 are cytoplasmic; it reads GGGSLASGGPGPGHASLSQRLRLYLADS. The chain crosses the membrane as a helical span at residues 864-884; sequence WNQCDLVALTCFLLGVGCRLT. Ca(2+) is bound by residues asparagine 865 and aspartate 868. The Extracellular portion of the chain corresponds to 885–886; that stretch reads PG. A helical membrane pass occupies residues 887-910; sequence LYHLGRTVLCIDFMVFTVRLLHIF. At 911–930 the chain is on the cytoplasmic side; the sequence is TVNKQLGPKIVIVSKMMKDV. The chain crosses the membrane as a helical span at residues 931–951; it reads FFFLFFLGVWLVAYGVATEGL. The Extracellular portion of the chain corresponds to 952-963; that stretch reads LRPRDSDFPSIL. Positions 964-984 form an intramembrane region, pore-forming; that stretch reads RRVFYRPYLQIFGQIPQEDMD. The Selectivity filter signature appears at 975–977; sequence FGQ. Over 985-1019 the chain is Extracellular; sequence VALMEHSNCSSEPGFWAHPPGAQAGTCVSQYANWL. A glycan (N-linked (GlcNAc...) asparagine) is linked at asparagine 992. A disulfide bond links cysteine 993 and cysteine 1011. The helical transmembrane segment at 1020 to 1040 threads the bilayer; that stretch reads VVLLLVIFLLVANILLVNLLI. Residues 1041-1214 are Cytoplasmic-facing; it reads AMFSYTFGKV…PPPDLPGSKD (174 aa). A calmodulin-binding region spans residues 1076–1176; sequence APPFIVISHL…EYEQRLKVLE (101 aa). The stretch at 1134-1187 forms a coiled coil; it reads LARARDKRESDSERLKRTSQKVDLALKQLGHIREYEQRLKVLEREVQQCSRVLG. The tract at residues 1136–1141 is mediates modulation by decavanadate and PIP2-binding; that stretch reads RARDKR. Residues serine 1145 and serine 1152 each carry the phosphoserine; by PKC modification.

The protein belongs to the transient receptor (TC 1.A.4) family. LTrpC subfamily. TRPM4 sub-subfamily. Homotetramer. Post-translationally, phosphorylation by PKC leads to increase the sensitivity to Ca(2+). In terms of processing, sumoylated. Desumoylated by SENP1. Widely expressed with a high expression in intestine and prostate. In brain, it is both expressed in whole cerebral arteries and isolated vascular smooth muscle cells. Prominently expressed in Purkinje fibers. Expressed at higher levels in T-helper 2 (Th2) cells as compared to T-helper 1 (Th1) cells. Expressed in keratocytes.

It is found in the cell membrane. Its subcellular location is the endoplasmic reticulum. It localises to the golgi apparatus. It catalyses the reaction Na(+)(in) = Na(+)(out). The enzyme catalyses K(+)(in) = K(+)(out). Its activity is regulated as follows. Displays weak voltage dependence, and repressed by decavanadate. Calmodulin-binding confers the Ca(2+) sensitivity. ATP is able to restore Ca(2+) sensitivity after desensitization. ATP inhibits channel activity. Phosphatidylinositol 4,5-bisphosphate (PIP2)-binding strongly enhances activity, by increasing the channel's Ca(2+) sensitivity and shifting its voltage dependence of activation towards negative potentials. Activity is also enhanced by 3,5-bis(trifluoromethyl)pyrazole derivative (BTP2). Exhibits pronounced temperature sensitivity, with activities strongly intensifying near physiological temperatures. Calcium-activated selective cation channel that mediates membrane depolarization. While it is activated by increase in intracellular Ca(2+), it is impermeable to it. Mediates transport of monovalent cations (Na(+) &gt; K(+) &gt; Cs(+) &gt; Li(+)), leading to depolarize the membrane. It thereby plays a central role in cadiomyocytes, neurons from entorhinal cortex, dorsal root and vomeronasal neurons, endocrine pancreas cells, kidney epithelial cells, cochlea hair cells etc. Participates in T-cell activation by modulating Ca(2+) oscillations after T lymphocyte activation, which is required for NFAT-dependent IL2 production. Involved in myogenic constriction of cerebral arteries. Controls insulin secretion in pancreatic beta-cells. May also be involved in pacemaking or could cause irregular electrical activity under conditions of Ca(2+) overload. Affects T-helper 1 (Th1) and T-helper 2 (Th2) cell motility and cytokine production through differential regulation of calcium signaling and NFATC1 localization. Enhances cell proliferation through up-regulation of the beta-catenin signaling pathway. Plays a role in keratinocyte differentiation. Its function is as follows. Lacks channel activity. This Homo sapiens (Human) protein is Transient receptor potential cation channel subfamily M member 4.